Reading from the N-terminus, the 833-residue chain is Capsid-associated protein Vp91 (833 aa).

The first 18 residues, 1–18 (MSGVVLLVLAIILITIFS), serve as a signal peptide directing secretion. Asn-137, Asn-180, Asn-199, and Asn-210 each carry an N-linked (GlcNAc...) asparagine; by host glycan. The C2HC BV-type zinc finger occupies 147-196 (CVPEDPCSGRPPGRYPMNELLLDTLVHNQHSDKNYSAGAHLYHPTLYLRC). Intrachain disulfides connect Cys-207/Cys-220 and Cys-260/Cys-273. The region spanning 223–281 (NELCEGRPDGFVLPYFPEALLVNEFVECRNGEHVVAQCADGQVFDRALMTCVHAHPCAF) is the Chitin-binding type-2 domain. N-linked (GlcNAc...) asparagine; by host glycans are attached at residues Asn-408, Asn-413, Asn-588, and Asn-609. The disordered stretch occupies residues 647 to 673 (EPGGDGDHWAPEVPPTQPEPELEPESE).

The protein localises to the virion. In terms of biological role, probable capsid-associated protein. In Choristoneura fumiferana nuclear polyhedrosis virus (CfMNPV), this protein is Capsid-associated protein Vp91.